The chain runs to 189 residues: Small ribosomal subunit protein uS5 (189 aa).

The 64-residue stretch at 22-85 folds into the S5 DRBM domain; that stretch reads FVDKLVAINR…ESAKRDLIFV (64 aa).

This sequence belongs to the universal ribosomal protein uS5 family. As to quaternary structure, part of the 30S ribosomal subunit. Contacts proteins S4 and S8.

In terms of biological role, with S4 and S12 plays an important role in translational accuracy. Functionally, located at the back of the 30S subunit body where it stabilizes the conformation of the head with respect to the body. This chain is Small ribosomal subunit protein uS5, found in Allorhizobium ampelinum (strain ATCC BAA-846 / DSM 112012 / S4) (Agrobacterium vitis (strain S4)).